The chain runs to 836 residues: Serine/threonine-protein kinase 1 (836 aa).

The segment covering 1-12 (MDHNSPKSRRSR) has biased composition (basic residues). The segment at 1-244 (MDHNSPKSRR…SLPDSITRED (244 aa)) is disordered. Positions 28–40 (SDSDSDQGRDRDK) are enriched in basic and acidic residues. Acidic residues-rich tracts occupy residues 64–75 (DGEGEEDDDDDS), 95–105 (DYDDDDGDESG), and 145–163 (EESS…DDGD). The span at 224–238 (MQQQNSKMSTTSLPD) shows a compositional bias: polar residues. In terms of domain architecture, Protein kinase spans 249–503 (YEFLNELGKG…AAEMLKHKFV (255 aa)). ATP-binding positions include 255-263 (LGKGSYGSV) and lysine 278. Aspartate 371 functions as the Proton acceptor in the catalytic mechanism. Disordered stretches follow at residues 539 to 571 (LEDT…APLT), 600 to 640 (EDET…DSWI), and 760 to 780 (TSSD…PLPP). Polar residues predominate over residues 562-571 (PQNSTEAPLT). Positions 606 to 618 (SDSRSQLVREKES) are enriched in basic and acidic residues.

This sequence belongs to the protein kinase superfamily. STE Ser/Thr protein kinase family. STE20 subfamily. As to quaternary structure, interacts with MOB1A and MOB1B via its N-terminal region at the plasma membrane and in the nucleus. Binds to BIK1 to phosphorylate and stabilize it. Interacts with and phosphorylates RBOHD upon flagellin perception to activate it. Mn(2+) is required as a cofactor. Post-translationally, autophosphorylates. Mostly expressed in mature tissues of roots, shoots, hypocotyls, cotyledons, stems, leaves and flowers, as well as in the shoot apical meristem (SAM).

It localises to the cell membrane. It is found in the nucleus. Its subcellular location is the golgi apparatus. The protein localises to the trans-Golgi network. The protein resides in the early endosome. The enzyme catalyses L-seryl-[protein] + ATP = O-phospho-L-seryl-[protein] + ADP + H(+). It carries out the reaction L-threonyl-[protein] + ATP = O-phospho-L-threonyl-[protein] + ADP + H(+). Serine/threonine-protein kinase. Regulates organ size in coordination with MOB1A by modulating cell proliferation and cell expansion, possibly by facilitating cell cycle exit. Positive regulator of the pathogen-associated molecular pattern (PAMP, e.g. flg22)-triggered immunity (PTI) signaling by stabilizing BIK1 and activating RBOHD by phosphorylation to promote the extracellular reactive oxygen species (ROS) burst involved in defense responses to bacterial infection. In Arabidopsis thaliana (Mouse-ear cress), this protein is Serine/threonine-protein kinase 1.